We begin with the raw amino-acid sequence, 757 residues long: NAD(P)H-quinone oxidoreductase subunit 5, chloroplastic (757 aa).

17 consecutive transmembrane segments (helical) span residues 9–29, 40–60, 89–109, 122–139, 147–167, 185–205, 219–239, 258–278, 280–300, 327–347, 354–374, 396–416, 425–445, 544–564, 607–627, 692–712, and 718–738; these read WIIPFVPLPVTMSIGLGLLLV, WAFPSVSLLSIVMVFSADLSV, IDPLTSIMSILITTVGIMVLI, LRFFAYMSFSNTSMLGLV, IYIFWELVGMCSYLLIGFWFT, GDFGLLLGILGLYWITGSFEF, NGVNSLFATLCASLLFAGAVA, TPISALIHAATMVAAGIFLVA, LLPLFTVIPYIMNLISLIGVI, LGYIMLAPGIGSYRAALFHLI, ALLFLGSGSIIHSMEPIVGYS, MTFLLGTLSLCGIPPLACFWS, WLYSPIFAIIACATAGLTAFY, LLPLLVLVLFTLFVGFIGIPF, SIAYFGIFIASLLYGSVYLFF, GIMNGVGVSSFFVGEGIKYLG, and SYLFVYLSYVSIFLLIYIFFF.

Belongs to the complex I subunit 5 family. As to quaternary structure, NDH is composed of at least 16 different subunits, 5 of which are encoded in the nucleus.

The protein localises to the plastid. It localises to the chloroplast thylakoid membrane. The catalysed reaction is a plastoquinone + NADH + (n+1) H(+)(in) = a plastoquinol + NAD(+) + n H(+)(out). The enzyme catalyses a plastoquinone + NADPH + (n+1) H(+)(in) = a plastoquinol + NADP(+) + n H(+)(out). Its function is as follows. NDH shuttles electrons from NAD(P)H:plastoquinone, via FMN and iron-sulfur (Fe-S) centers, to quinones in the photosynthetic chain and possibly in a chloroplast respiratory chain. The immediate electron acceptor for the enzyme in this species is believed to be plastoquinone. Couples the redox reaction to proton translocation, and thus conserves the redox energy in a proton gradient. The chain is NAD(P)H-quinone oxidoreductase subunit 5, chloroplastic (ndhF) from Drimys granadensis.